We begin with the raw amino-acid sequence, 284 residues long: Bifunctional protein FolD (284 aa).

NADP(+) contacts are provided by residues 166-168 (GAS) and Ile-232.

The protein belongs to the tetrahydrofolate dehydrogenase/cyclohydrolase family. In terms of assembly, homodimer.

It catalyses the reaction (6R)-5,10-methylene-5,6,7,8-tetrahydrofolate + NADP(+) = (6R)-5,10-methenyltetrahydrofolate + NADPH. The enzyme catalyses (6R)-5,10-methenyltetrahydrofolate + H2O = (6R)-10-formyltetrahydrofolate + H(+). It functions in the pathway one-carbon metabolism; tetrahydrofolate interconversion. Functionally, catalyzes the oxidation of 5,10-methylenetetrahydrofolate to 5,10-methenyltetrahydrofolate and then the hydrolysis of 5,10-methenyltetrahydrofolate to 10-formyltetrahydrofolate. The polypeptide is Bifunctional protein FolD (Glaesserella parasuis serovar 5 (strain SH0165) (Haemophilus parasuis)).